We begin with the raw amino-acid sequence, 762 residues long: Dolichyl-phosphate-mannose--protein mannosyltransferase 4 (762 aa).

Basic residues predominate over residues 1–10 (MSVPKKRNHG). The tract at residues 1 to 24 (MSVPKKRNHGKLPPSTKDVDDPSL) is disordered. Topologically, residues 1–53 (MSVPKKRNHGKLPPSTKDVDDPSLKYTKAAPKCEQVAEHWLLQPLPEPESRYS) are lumenal. The chain crosses the membrane as a helical span at residues 54 to 74 (FWVTIVTLLAFAARFYKIWYP). Over 75–136 (KEVVFDEVHF…IGYSYETHPA (62 aa)) the chain is Cytoplasmic. The helical transmembrane segment at 137–157 (PYIAYRSFNAILGTLTVPIMF) threads the bilayer. Over 158 to 166 (NTLKELNFR) the chain is Lumenal. Residues 167 to 187 (AITCAFASLLVAIDTAHVTET) form a helical membrane-spanning segment. Residues 188–189 (RL) are Cytoplasmic-facing. Residues 190-210 (ILLDAILIISIAATMYCYVRF) traverse the membrane as a helical segment. Residues 211 to 217 (YKCQLRQ) lie on the Lumenal side of the membrane. Residues 218 to 238 (PFTWSWYIWLHATGLSLSFVI) form a helical membrane-spanning segment. The Cytoplasmic segment spans residues 239–242 (STKY). Residues 243-263 (VGVMTYSAIGFAAVVNLWQLL) traverse the membrane as a helical segment. Over 264–283 (DIKAGLSLRQFMRHFSKRLN) the chain is Lumenal. The chain crosses the membrane as a helical span at residues 284–304 (GLVLIPFVIYLFWFWVHFTVL). The Cytoplasmic portion of the chain corresponds to 305 to 593 (NTSGPGDAFM…NGDEKKQIYF (289 aa)). 3 MIR domains span residues 331 to 391 (SKTV…VLPP), 399 to 458 (GQAV…FQPL), and 464 to 521 (GHVL…VDEI). A helical transmembrane segment spans residues 594–614 (IGNIIGWWFQVISLAVFVGII). At 615-635 (VADLITRHRGYYALNKMTREK) the chain is on the lumenal side. The chain crosses the membrane as a helical span at residues 636–656 (LYGPLMFFFVSWCCHYFPFFL). Residues 657–716 (MARQKFLHHYLPAHLIACLFSGALWEVIFSDCKSLDLEKDEDISGASYERNPKVYVKPYT) lie on the Cytoplasmic side of the membrane. A helical membrane pass occupies residues 717 to 737 (VFLVCVSCAVAWFFVYFSPLV). Topologically, residues 738 to 762 (YGDVSLSPSEVVSREWFDIELNFSK) are lumenal. The N-linked (GlcNAc...) asparagine glycan is linked to Asn759.

The protein belongs to the glycosyltransferase 39 family. In terms of assembly, forms a functional homodimer and may form a heterodimer with PMT6. Interacts with RCR1.

It is found in the endoplasmic reticulum membrane. It catalyses the reaction a di-trans,poly-cis-dolichyl beta-D-mannosyl phosphate + L-seryl-[protein] = 3-O-(alpha-D-mannosyl)-L-seryl-[protein] + a di-trans,poly-cis-dolichyl phosphate + H(+). It carries out the reaction a di-trans,poly-cis-dolichyl beta-D-mannosyl phosphate + L-threonyl-[protein] = 3-O-(alpha-D-mannosyl)-L-threonyl-[protein] + a di-trans,poly-cis-dolichyl phosphate + H(+). It participates in protein modification; protein glycosylation. Functionally, protein O-mannosyltransferase involved in O-glycosylation which is essential for cell wall rigidity. Forms a homodimeric complex to transfer mannose from Dol-P-mannose to Ser or Thr residues on proteins. Specifically acts on secretory proteins with an ER-luminally oriented Ser/Thr-rich region flanked by a membrane anchor such as FUS1, AXL2, GAS1, KEX2, MID2, WSC1, WSC2, OPY2, PRM5, RAX2, or YNL176. The polypeptide is Dolichyl-phosphate-mannose--protein mannosyltransferase 4 (Saccharomyces cerevisiae (strain ATCC 204508 / S288c) (Baker's yeast)).